The primary structure comprises 107 residues: NADH-quinone oxidoreductase subunit K 2 (107 aa).

A run of 3 helical transmembrane segments spans residues 3–23, 30–50, and 67–87; these read LPIY…LWGA, VRIL…LITF, and ILTL…LAII.

It belongs to the complex I subunit 4L family. In terms of assembly, NDH-1 is composed of 14 different subunits. Subunits NuoA, H, J, K, L, M, N constitute the membrane sector of the complex.

The protein localises to the cell membrane. It carries out the reaction a quinone + NADH + 5 H(+)(in) = a quinol + NAD(+) + 4 H(+)(out). In terms of biological role, NDH-1 shuttles electrons from NADH, via FMN and iron-sulfur (Fe-S) centers, to quinones in the respiratory chain. The immediate electron acceptor for the enzyme in this species is believed to be a menaquinone. Couples the redox reaction to proton translocation (for every two electrons transferred, four hydrogen ions are translocated across the cytoplasmic membrane), and thus conserves the redox energy in a proton gradient. This chain is NADH-quinone oxidoreductase subunit K 2, found in Symbiobacterium thermophilum (strain DSM 24528 / JCM 14929 / IAM 14863 / T).